The following is a 158-amino-acid chain: C-type lectin (158 aa).

The signal sequence occupies residues 1–23; the sequence is MWQFTVVSLGWLAVFLSLSGAKG. Cystine bridges form between C26–C37, C54–C154, and C129–C146. Positions 33–155 constitute a C-type lectin domain; sequence RNGVCNKLFP…CASLHPFICQ (123 aa). The short motif at 119-121 is the Mannose-binding element; that stretch reads EPN. Positions 127, 142, and 143 each coordinate Ca(2+).

The protein belongs to the true venom lectin family. Expressed by the venom gland.

Its subcellular location is the secreted. Mannose-binding lectin which recognizes specific carbohydrate structures and agglutinates a variety of animal cells by binding to cell-surface glycoproteins and glycolipids. May be a calcium-dependent lectin. This chain is C-type lectin, found in Cerberus rynchops (Dog-faced water snake).